A 411-amino-acid polypeptide reads, in one-letter code: Inhibin beta B chain (411 aa).

Residues 1-28 form the signal peptide; the sequence is MDGLPGRALGAACLLLLVAGWLGPEAWG. Residues 28-69 form a disordered region; it reads GSPTPPPSPAAPPPPPPPGAPGGSQDTCTSCGGGGGGFRRPE. A propeptide spanning residues 29–296 is cleaved from the precursor; it reads SPTPPPSPAA…GDSRHRIRKR (268 aa). The segment covering 30-47 has biased composition (pro residues); that stretch reads PTPPPSPAAPPPPPPPGA. An N-linked (GlcNAc...) asparagine glycan is attached at Asn97. 4 disulfide bridges follow: Cys300–Cys308, Cys307–Cys376, Cys336–Cys408, and Cys340–Cys410.

The protein belongs to the TGF-beta family. Dimeric, linked by one or more disulfide bonds. Inhibin B is a dimer of alpha and beta-B. Activin B is a homodimer of beta-B. Activin AB is a dimer of beta-A and beta-B. Interacts with FST and FSTL3. Activin B interacts with BMPR2. In terms of tissue distribution, uterus, testis, ovary, lung, kidney, brain, CJ7 embryonic stem cells, and possibly in liver.

It is found in the secreted. Inhibins and activins inhibit and activate, respectively, the secretion of follitropin by the pituitary gland. Inhibins/activins are involved in regulating a number of diverse functions such as hypothalamic and pituitary hormone secretion, gonadal hormone secretion, germ cell development and maturation, erythroid differentiation, insulin secretion, nerve cell survival, embryonic axial development or bone growth, depending on their subunit composition. Inhibins appear to oppose the functions of activins. Functionally, activin B is a dimer of alpha and beta-B that plays a role in several essential biological processes including embryonic development, stem cell maintenance and differentiation, haematopoiesis, cell proliferation and wound healing. Signals through type I receptor ACVR1C, abundantly expressed in pancreatic beta cells, and type II receptors like ACVR2A. Upon ligand binding, these receptors phosphorylate intracellular signaling mediators SMAD2 and SMAD3, which form a complex with SMAD4, translocate to the nucleus, and regulate gene expression. Plays a crucial role in the induction of hepcidin by inflammation through activation of ACVR1C and subsequent phosphorylation of SMAD1/5/8. Regulates adipocyte lipid metabolism by decreasing non-esterified fatty acids and glycerol release and increases intracellular triglyceride content. Stimulates wound healing by promoting cell migration and hair follicle regeneration through the JNK and ERK signaling pathways downstream of RHOA. Its function is as follows. Inhibin B is a dimer of alpha and beta-B that plays a crucial role in the regulation of the reproductive system by inhibiting the secretion of follicle-stimulating hormone (FSH) from the anterior pituitary gland. Thereby, maintains reproductive homeostasis in both males and females. Acts as a more potent suppressor of FSH release than inhibin A. Functions as competitive receptor antagonist binding activin type II receptors with high affinity in the presence of the TGF-beta type III coreceptor/TGFBR3L. This Mus musculus (Mouse) protein is Inhibin beta B chain (Inhbb).